A 137-amino-acid chain; its full sequence is Large ribosomal subunit protein uL16 (137 aa).

It belongs to the universal ribosomal protein uL16 family. Part of the 50S ribosomal subunit.

In terms of biological role, binds 23S rRNA and is also seen to make contacts with the A and possibly P site tRNAs. The polypeptide is Large ribosomal subunit protein uL16 (Sinorhizobium medicae (strain WSM419) (Ensifer medicae)).